The chain runs to 507 residues: Sensor protein CseC (507 aa).

A disordered region spans residues 1 to 42 (MRGFFRQRRSVSPPGHPYDRTGPGEHAGPGARTGPGGRPRVL). Residues 25–37 (EHAGPGARTGPGG) show a composition bias toward gly residues. The next 2 helical transmembrane spans lie at 60-80 (LSAA…LVVH) and 183-203 (ALVI…VLIG). Residues 204 to 260 (GQLSRRLREAAAAANRVASGEPDVRVRDAIGGVVRDETDDVARAVDAMADALQQRIE) form the HAMP domain. Residues 268-470 (DIAHELRTPV…VAVLWLPEHA (203 aa)) form the Histidine kinase domain. H271 carries the post-translational modification Phosphohistidine; by autocatalysis. The segment at 472 to 507 (TNTGSYPMLPDRSKSGASSSARDMSREASQGMSRKP) is disordered. A compositionally biased stretch (polar residues) spans 486 to 507 (SGASSSARDMSREASQGMSRKP).

The protein localises to the cell membrane. It carries out the reaction ATP + protein L-histidine = ADP + protein N-phospho-L-histidine.. Functionally, member of the two-component regulatory system CseB/CseC involved in the stability of the cell envelope, through activation of transcription of RNA polymerase sigma-E factor. CseC functions as a membrane-associated protein kinase that phosphorylates CseB in response to changes in the cell envelope. This Streptomyces coelicolor (strain ATCC BAA-471 / A3(2) / M145) protein is Sensor protein CseC (cseC).